A 260-amino-acid chain; its full sequence is Segregation and condensation protein A (260 aa).

This sequence belongs to the ScpA family. In terms of assembly, component of a cohesin-like complex composed of ScpA, ScpB and the Smc homodimer, in which ScpA and ScpB bind to the head domain of Smc. The presence of the three proteins is required for the association of the complex with DNA.

It localises to the cytoplasm. Functionally, participates in chromosomal partition during cell division. May act via the formation of a condensin-like complex containing Smc and ScpB that pull DNA away from mid-cell into both cell halves. The sequence is that of Segregation and condensation protein A from Halalkalibacterium halodurans (strain ATCC BAA-125 / DSM 18197 / FERM 7344 / JCM 9153 / C-125) (Bacillus halodurans).